Reading from the N-terminus, the 66-residue chain is SPbeta prophage-derived uncharacterized protein YopM (66 aa).

This chain is SPbeta prophage-derived uncharacterized protein YopM (yopM), found in Bacillus subtilis (strain 168).